A 104-amino-acid polypeptide reads, in one-letter code: Large ribosomal subunit protein uL24 (104 aa).

It belongs to the universal ribosomal protein uL24 family. As to quaternary structure, part of the 50S ribosomal subunit.

One of two assembly initiator proteins, it binds directly to the 5'-end of the 23S rRNA, where it nucleates assembly of the 50S subunit. Its function is as follows. One of the proteins that surrounds the polypeptide exit tunnel on the outside of the subunit. This is Large ribosomal subunit protein uL24 from Shewanella pealeana (strain ATCC 700345 / ANG-SQ1).